Here is a 60-residue protein sequence, read N- to C-terminus: UPF0434 protein SG0997 (60 aa).

Belongs to the UPF0434 family.

The sequence is that of UPF0434 protein SG0997 from Sodalis glossinidius (strain morsitans).